Reading from the N-terminus, the 143-residue chain is Phosphoprotein 32 (143 aa).

Residues 1–14 (MESSNINALQQPSS) are compositionally biased toward polar residues. The tract at residues 1–32 (MESSNINALQQPSSIAHHPSKQCASSLNETVK) is disordered.

The protein belongs to the varicellovirus ORF32 protein family. Phosphorylated by ORF47 protein.

In Homo sapiens (Human), this protein is Phosphoprotein 32.